Consider the following 66-residue polypeptide: Large ribosomal subunit protein bL31 (66 aa).

Zn(2+) is bound by residues cysteine 16, cysteine 18, cysteine 36, and cysteine 39.

It belongs to the bacterial ribosomal protein bL31 family. Type A subfamily. Part of the 50S ribosomal subunit. It depends on Zn(2+) as a cofactor.

Its function is as follows. Binds the 23S rRNA. This is Large ribosomal subunit protein bL31 from Nitratiruptor sp. (strain SB155-2).